A 181-amino-acid polypeptide reads, in one-letter code: Adenine phosphoribosyltransferase (181 aa).

Belongs to the purine/pyrimidine phosphoribosyltransferase family. As to quaternary structure, homodimer.

The protein resides in the cytoplasm. It catalyses the reaction AMP + diphosphate = 5-phospho-alpha-D-ribose 1-diphosphate + adenine. Its pathway is purine metabolism; AMP biosynthesis via salvage pathway; AMP from adenine: step 1/1. Its function is as follows. Catalyzes a salvage reaction resulting in the formation of AMP, that is energically less costly than de novo synthesis. The protein is Adenine phosphoribosyltransferase of Neorhizobium galegae (Rhizobium galegae).